The following is a 364-amino-acid chain: Chorismate synthase (364 aa).

Residue arginine 47 coordinates NADP(+). Residues 124–126, glycine 287, 302–306, and arginine 328 contribute to the FMN site; these read RAS and KPTAT.

It belongs to the chorismate synthase family. In terms of assembly, homotetramer. The cofactor is FMNH2.

The enzyme catalyses 5-O-(1-carboxyvinyl)-3-phosphoshikimate = chorismate + phosphate. It functions in the pathway metabolic intermediate biosynthesis; chorismate biosynthesis; chorismate from D-erythrose 4-phosphate and phosphoenolpyruvate: step 7/7. Catalyzes the anti-1,4-elimination of the C-3 phosphate and the C-6 proR hydrogen from 5-enolpyruvylshikimate-3-phosphate (EPSP) to yield chorismate, which is the branch point compound that serves as the starting substrate for the three terminal pathways of aromatic amino acid biosynthesis. This reaction introduces a second double bond into the aromatic ring system. This chain is Chorismate synthase, found in Prochlorococcus marinus (strain MIT 9515).